Here is a 291-residue protein sequence, read N- to C-terminus: Nucleotide-binding protein LJ_0866 (291 aa).

13 to 20 (GMSGAGKT) contributes to the ATP binding site. 63–66 (DLRV) contributes to the GTP binding site.

It belongs to the RapZ-like family.

Functionally, displays ATPase and GTPase activities. This chain is Nucleotide-binding protein LJ_0866, found in Lactobacillus johnsonii (strain CNCM I-12250 / La1 / NCC 533).